Consider the following 701-residue polypeptide: Elongation factor G (701 aa).

The region spanning 11–287 (TKVRNIGIMA…AVIDYLPSPL (277 aa)) is the tr-type G domain. Residues 20 to 27 (AHIDAGKT), 84 to 88 (DTPGH), and 138 to 141 (NKMD) each bind GTP.

It belongs to the TRAFAC class translation factor GTPase superfamily. Classic translation factor GTPase family. EF-G/EF-2 subfamily.

The protein localises to the cytoplasm. Functionally, catalyzes the GTP-dependent ribosomal translocation step during translation elongation. During this step, the ribosome changes from the pre-translocational (PRE) to the post-translocational (POST) state as the newly formed A-site-bound peptidyl-tRNA and P-site-bound deacylated tRNA move to the P and E sites, respectively. Catalyzes the coordinated movement of the two tRNA molecules, the mRNA and conformational changes in the ribosome. This Mycobacterium ulcerans (strain Agy99) protein is Elongation factor G.